We begin with the raw amino-acid sequence, 64 residues long: Cytochrome b-c1 complex subunit 9 (64 aa).

At 2–18 (SSPTIPSRLYSLLFRRT) the chain is on the mitochondrial matrix side. A helical transmembrane segment spans residues 19–43 (STFALTIAVGALFFERAFDQGADAI). The Mitochondrial intermembrane portion of the chain corresponds to 44-63 (YEHINEGKLWKHIKHKYENK).

This sequence belongs to the UQCR10/QCR9 family. In terms of assembly, component of the ubiquinol-cytochrome c oxidoreductase (cytochrome b-c1 complex, complex III, CIII), a multisubunit enzyme composed of 11 subunits. The complex is composed of 3 respiratory subunits cytochrome b, cytochrome c1 and Rieske protein UQCRFS1, 2 core protein subunits UQCRC1/QCR1 and UQCRC2/QCR2, and 6 low-molecular weight protein subunits UQCRH/QCR6, UQCRB/QCR7, UQCRQ/QCR8, UQCR10/QCR9, UQCR11/QCR10 and subunit 9, the cleavage product of Rieske protein UQCRFS1. The complex exists as an obligatory dimer and forms supercomplexes (SCs) in the inner mitochondrial membrane with NADH-ubiquinone oxidoreductase (complex I, CI) and cytochrome c oxidase (complex IV, CIV), resulting in different assemblies (supercomplex SCI(1)III(2)IV(1) and megacomplex MCI(2)III(2)IV(2)). Interacts with STMP1.

The protein localises to the mitochondrion inner membrane. Functionally, component of the ubiquinol-cytochrome c oxidoreductase, a multisubunit transmembrane complex that is part of the mitochondrial electron transport chain which drives oxidative phosphorylation. The respiratory chain contains 3 multisubunit complexes succinate dehydrogenase (complex II, CII), ubiquinol-cytochrome c oxidoreductase (cytochrome b-c1 complex, complex III, CIII) and cytochrome c oxidase (complex IV, CIV), that cooperate to transfer electrons derived from NADH and succinate to molecular oxygen, creating an electrochemical gradient over the inner membrane that drives transmembrane transport and the ATP synthase. The cytochrome b-c1 complex catalyzes electron transfer from ubiquinol to cytochrome c, linking this redox reaction to translocation of protons across the mitochondrial inner membrane, with protons being carried across the membrane as hydrogens on the quinol. In the process called Q cycle, 2 protons are consumed from the matrix, 4 protons are released into the intermembrane space and 2 electrons are passed to cytochrome c. The polypeptide is Cytochrome b-c1 complex subunit 9 (Uqcr10) (Mus musculus (Mouse)).